The chain runs to 80 residues: RNA-binding protein Hfq (80 aa).

Residues 10 to 70 (DIFLNQVRKE…ISTISPMKSV (61 aa)) enclose the Sm domain.

Belongs to the Hfq family. As to quaternary structure, homohexamer.

In terms of biological role, RNA chaperone that binds small regulatory RNA (sRNAs) and mRNAs to facilitate mRNA translational regulation in response to envelope stress, environmental stress and changes in metabolite concentrations. Also binds with high specificity to tRNAs. In Ruminiclostridium cellulolyticum (strain ATCC 35319 / DSM 5812 / JCM 6584 / H10) (Clostridium cellulolyticum), this protein is RNA-binding protein Hfq.